The following is a 379-amino-acid chain: Phospholipase A1 (379 aa).

Positions 1 to 20 (MKFITAILVIFCVYLLSTAG) are cleaved as a signal peptide. Residues 21-73 (DSKILPLKKLPSKIFGHLKSHVDNTVKKPLKVFGHLKSHVENSVGPLRMNKLT) constitute a propeptide that is removed on maturation. C76 and C154 are disulfide-bonded. A glycan (N-linked (GlcNAc...) asparagine) is linked at N126. S204 acts as the Nucleophile in catalysis. Residue D232 is the Charge relay system of the active site. 2 cysteine pairs are disulfide-bonded: C243/C248 and C285/C291. H293 functions as the Charge relay system in the catalytic mechanism.

This sequence belongs to the AB hydrolase superfamily. Lipase family. Contains five disulfide bonds. Expressed by the venom gland.

The protein resides in the secreted. It catalyses the reaction a 1,2-diacyl-sn-glycero-3-phosphocholine + H2O = a 2-acyl-sn-glycero-3-phosphocholine + a fatty acid + H(+). Its function is as follows. Catalyzes the hydrolysis of phosphatidylcholine with phospholipase A1 activity. May act as an allergen and induce hemolytic activity. In Dinoponera quadriceps (South American ant), this protein is Phospholipase A1.